A 311-amino-acid polypeptide reads, in one-letter code: Quinolinate synthase (311 aa).

Iminosuccinate is bound by residues H25 and S42. C87 lines the [4Fe-4S] cluster pocket. Iminosuccinate is bound by residues 113–115 (YIN) and S130. C175 is a binding site for [4Fe-4S] cluster. Iminosuccinate is bound by residues 201 to 203 (HPE) and T218. C268 is a [4Fe-4S] cluster binding site.

Belongs to the quinolinate synthase family. Type 2 subfamily. Requires [4Fe-4S] cluster as cofactor.

Its subcellular location is the cytoplasm. The enzyme catalyses iminosuccinate + dihydroxyacetone phosphate = quinolinate + phosphate + 2 H2O + H(+). It participates in cofactor biosynthesis; NAD(+) biosynthesis; quinolinate from iminoaspartate: step 1/1. Catalyzes the condensation of iminoaspartate with dihydroxyacetone phosphate to form quinolinate. The polypeptide is Quinolinate synthase (Saccharolobus solfataricus (strain ATCC 35092 / DSM 1617 / JCM 11322 / P2) (Sulfolobus solfataricus)).